The sequence spans 229 residues: 2,3-bisphosphoglycerate-dependent phosphoglycerate mutase (229 aa).

Residues Arg7 to Asn14, Thr20 to Gly21, Arg59, Glu86 to Tyr89, Lys97, Arg113 to Arg114, and Gly182 to Asn183 contribute to the substrate site. The Tele-phosphohistidine intermediate role is filled by His8. Catalysis depends on Glu86, which acts as the Proton donor/acceptor.

It belongs to the phosphoglycerate mutase family. BPG-dependent PGAM subfamily.

The catalysed reaction is (2R)-2-phosphoglycerate = (2R)-3-phosphoglycerate. It functions in the pathway carbohydrate degradation; glycolysis; pyruvate from D-glyceraldehyde 3-phosphate: step 3/5. Functionally, catalyzes the interconversion of 2-phosphoglycerate and 3-phosphoglycerate. The protein is 2,3-bisphosphoglycerate-dependent phosphoglycerate mutase of Listeria monocytogenes serotype 4b (strain F2365).